The sequence spans 389 residues: Dihydroorotase (389 aa).

H51 and H53 together coordinate Zn(2+). Substrate contacts are provided by residues H53 to R55 and N85. Zn(2+)-binding residues include K133, H158, H192, and D254. K133 carries the N6-carboxylysine modification. D254 is an active-site residue. Substrate-binding positions include H258 and P272–G273.

It belongs to the metallo-dependent hydrolases superfamily. DHOase family. Class I DHOase subfamily. The cofactor is Zn(2+).

The enzyme catalyses (S)-dihydroorotate + H2O = N-carbamoyl-L-aspartate + H(+). Its pathway is pyrimidine metabolism; UMP biosynthesis via de novo pathway; (S)-dihydroorotate from bicarbonate: step 3/3. Catalyzes the reversible cyclization of carbamoyl aspartate to dihydroorotate. The protein is Dihydroorotase of Sulfurisphaera tokodaii (strain DSM 16993 / JCM 10545 / NBRC 100140 / 7) (Sulfolobus tokodaii).